The chain runs to 251 residues: uncharacterized protein (251 aa).

The a divalent metal cation site is built by H6, H8, E90, H130, H154, and D202.

This sequence belongs to the metallo-dependent hydrolases superfamily. TatD-type hydrolase family. A divalent metal cation is required as a cofactor.

This is an uncharacterized protein from Haemophilus influenzae (strain ATCC 51907 / DSM 11121 / KW20 / Rd).